The primary structure comprises 1405 residues: DNA-directed RNA polymerase subunit beta' (1405 aa).

Positions 70, 72, 85, and 88 each coordinate Zn(2+). Residues Asp-458, Asp-460, and Asp-462 each contribute to the Mg(2+) site. Residues Cys-813, Cys-887, Cys-894, and Cys-897 each coordinate Zn(2+).

This sequence belongs to the RNA polymerase beta' chain family. In terms of assembly, the RNAP catalytic core consists of 2 alpha, 1 beta, 1 beta' and 1 omega subunit. When a sigma factor is associated with the core the holoenzyme is formed, which can initiate transcription. Mg(2+) serves as cofactor. The cofactor is Zn(2+).

It carries out the reaction RNA(n) + a ribonucleoside 5'-triphosphate = RNA(n+1) + diphosphate. In terms of biological role, DNA-dependent RNA polymerase catalyzes the transcription of DNA into RNA using the four ribonucleoside triphosphates as substrates. The chain is DNA-directed RNA polymerase subunit beta' from Albidiferax ferrireducens (strain ATCC BAA-621 / DSM 15236 / T118) (Rhodoferax ferrireducens).